The following is a 1118-amino-acid chain: DNA mismatch repair protein MSH1, mitochondrial (1118 aa).

768-775 lines the ATP pocket; it reads GPNGGGKS.

This sequence belongs to the DNA mismatch repair MutS family.

It localises to the mitochondrion. The protein resides in the plastid. It is found in the chloroplast. Its function is as follows. DNA mismatch repair protein specifically involved in maintenance of mitochondrial genome configuration by controlling specific rearranged portion. Functions by suppressing asymmetric recombination at some repeat pairs. This is DNA mismatch repair protein MSH1, mitochondrial (MSH1) from Arabidopsis thaliana (Mouse-ear cress).